The sequence spans 343 residues: Tetraacyldisaccharide 4'-kinase (343 aa).

Residue His-65 to Thr-72 coordinates ATP.

Belongs to the LpxK family.

The catalysed reaction is a lipid A disaccharide + ATP = a lipid IVA + ADP + H(+). Its pathway is glycolipid biosynthesis; lipid IV(A) biosynthesis; lipid IV(A) from (3R)-3-hydroxytetradecanoyl-[acyl-carrier-protein] and UDP-N-acetyl-alpha-D-glucosamine: step 6/6. Transfers the gamma-phosphate of ATP to the 4'-position of a tetraacyldisaccharide 1-phosphate intermediate (termed DS-1-P) to form tetraacyldisaccharide 1,4'-bis-phosphate (lipid IVA). The protein is Tetraacyldisaccharide 4'-kinase of Neisseria gonorrhoeae (strain ATCC 700825 / FA 1090).